A 159-amino-acid polypeptide reads, in one-letter code: 2-C-methyl-D-erythritol 2,4-cyclodiphosphate synthase (159 aa).

Residues D9 and H11 each coordinate a divalent metal cation. 4-CDP-2-C-methyl-D-erythritol 2-phosphate is bound by residues 9 to 11 and 35 to 36; these read DVH and HS. H43 contributes to the a divalent metal cation binding site. 4-CDP-2-C-methyl-D-erythritol 2-phosphate is bound by residues 57 to 59, 62 to 66, 133 to 136, F140, and R143; these read DIG, FPDTD, and TTTE.

It belongs to the IspF family. As to quaternary structure, homotrimer. Requires a divalent metal cation as cofactor.

It catalyses the reaction 4-CDP-2-C-methyl-D-erythritol 2-phosphate = 2-C-methyl-D-erythritol 2,4-cyclic diphosphate + CMP. It functions in the pathway isoprenoid biosynthesis; isopentenyl diphosphate biosynthesis via DXP pathway; isopentenyl diphosphate from 1-deoxy-D-xylulose 5-phosphate: step 4/6. Involved in the biosynthesis of isopentenyl diphosphate (IPP) and dimethylallyl diphosphate (DMAPP), two major building blocks of isoprenoid compounds. Catalyzes the conversion of 4-diphosphocytidyl-2-C-methyl-D-erythritol 2-phosphate (CDP-ME2P) to 2-C-methyl-D-erythritol 2,4-cyclodiphosphate (ME-CPP) with a corresponding release of cytidine 5-monophosphate (CMP). The sequence is that of 2-C-methyl-D-erythritol 2,4-cyclodiphosphate synthase from Mannheimia succiniciproducens (strain KCTC 0769BP / MBEL55E).